The primary structure comprises 891 residues: Alanine--tRNA ligase (891 aa).

Zn(2+)-binding residues include His-569, His-573, Cys-671, and His-675.

The protein belongs to the class-II aminoacyl-tRNA synthetase family. As to quaternary structure, homotetramer. It depends on Zn(2+) as a cofactor.

It is found in the cytoplasm. The catalysed reaction is tRNA(Ala) + L-alanine + ATP = L-alanyl-tRNA(Ala) + AMP + diphosphate. Catalyzes the attachment of alanine to tRNA(Ala) in a two-step reaction: alanine is first activated by ATP to form Ala-AMP and then transferred to the acceptor end of tRNA(Ala). Also edits incorrectly charged Ser-tRNA(Ala) and Gly-tRNA(Ala) via its editing domain. This is Alanine--tRNA ligase from Blochmanniella floridana.